A 484-amino-acid polypeptide reads, in one-letter code: UDP-N-acetylmuramate--L-alanine ligase (484 aa).

Residue 127–133 (GTHGKTT) coordinates ATP.

The protein belongs to the MurCDEF family.

It localises to the cytoplasm. The catalysed reaction is UDP-N-acetyl-alpha-D-muramate + L-alanine + ATP = UDP-N-acetyl-alpha-D-muramoyl-L-alanine + ADP + phosphate + H(+). Its pathway is cell wall biogenesis; peptidoglycan biosynthesis. Cell wall formation. The chain is UDP-N-acetylmuramate--L-alanine ligase from Shewanella amazonensis (strain ATCC BAA-1098 / SB2B).